The sequence spans 486 residues: Matrilin-3 (486 aa).

The signal sequence occupies residues 1 to 28 (MPRPAPARRLPGLLLLLWPLLLLPSAAP). A disordered region spans residues 32–75 (ARPGFRRLETRGPGGSPGRRPSPAAPDGAPASGTSEPGRARGAG). The segment covering 49–64 (GRRPSPAAPDGAPASG) has biased composition (low complexity). The region spanning 83–258 (DLVFIIDSSR…GVIEKLSSRF (176 aa)) is the VWFA domain. Arg198 is modified (omega-N-methylarginine). 4 EGF-like domains span residues 264–305 (ALDP…KTCS), 306–347 (ALDR…KTCS), 348–389 (AQDK…KTCS), and 390–431 (VRDK…KTCS). Cystine bridges form between Cys268–Cys279, Cys275–Cys289, Cys291–Cys304, Cys310–Cys321, Cys317–Cys331, Cys333–Cys346, Cys352–Cys363, Cys359–Cys373, Cys375–Cys388, Cys394–Cys405, Cys401–Cys415, and Cys417–Cys430. Ser441 carries the phosphoserine; by FAM20C modification. At Thr442 the chain carries Phosphothreonine; by FAM20C. A coiled-coil region spans residues 456 to 480 (DKVSSYLQRLNTKLDDILEKLKINE).

Can form homooligomers (monomers, dimers, trimers and tetramers) and heterooligomers with matrilin-1. Interacts with COMP. Component of a complex containing at least CRELD2, MANF, MATN3 and PDIA4. Expressed only in cartilaginous tissues, such as vertebrae, ribs and shoulders.

It is found in the secreted. Functionally, major component of the extracellular matrix of cartilage and may play a role in the formation of extracellular filamentous networks. The sequence is that of Matrilin-3 (MATN3) from Homo sapiens (Human).